The sequence spans 312 residues: R2-like ligand binding oxidase (312 aa).

Positions 68, 101, and 104 each coordinate Mn(2+). Residues 71 to 162 (VTQDIQPFMA…AAQVRASATY (92 aa)) constitute a cross-link (3-(O4'-tyrosyl)-valine (Val-Tyr)). A Fe cation-binding site is contributed by glutamate 101. Fe cation-binding residues include glutamate 167, glutamate 202, and histidine 205.

Belongs to the ribonucleoside diphosphate reductase small chain family. R2-like ligand binding oxidase subfamily. As to quaternary structure, homodimer. Requires Fe cation as cofactor. Mn(2+) is required as a cofactor.

Probable oxidase that might be involved in lipid metabolism. This Mycobacterium sp. (strain KMS) protein is R2-like ligand binding oxidase.